Reading from the N-terminus, the 98-residue chain is NADH-ubiquinone oxidoreductase chain 4L (98 aa).

3 helical membrane passes run 1-21, 26-46, and 61-81; these read MTPT…GMLI, LMAS…MTAV, and IIML…LVSI.

Belongs to the complex I subunit 4L family. As to quaternary structure, core subunit of respiratory chain NADH dehydrogenase (Complex I) which is composed of 45 different subunits.

It is found in the mitochondrion inner membrane. The enzyme catalyses a ubiquinone + NADH + 5 H(+)(in) = a ubiquinol + NAD(+) + 4 H(+)(out). In terms of biological role, core subunit of the mitochondrial membrane respiratory chain NADH dehydrogenase (Complex I) which catalyzes electron transfer from NADH through the respiratory chain, using ubiquinone as an electron acceptor. Part of the enzyme membrane arm which is embedded in the lipid bilayer and involved in proton translocation. The chain is NADH-ubiquinone oxidoreductase chain 4L (MT-ND4L) from Papio hamadryas (Hamadryas baboon).